A 405-amino-acid chain; its full sequence is mRNA cap guanine-N(7) methyltransferase (405 aa).

Residues 1–78 (MDNILNPEDN…PRLEEGHGSL (78 aa)) are disordered. Polar residues-rich tracts occupy residues 9-18 (DNVSQTNTET) and 36-45 (KFTASGQNLD). A compositionally biased stretch (basic and acidic residues) spans 58–75 (KAGEPESPSKRPRLEEGH). The mRNA cap 0 methyltransferase domain maps to 97–404 (SRIFHLRNFN…IYLLFAFEKQ (308 aa)). 106-107 (NN) lines the mRNA pocket. Positions 110, 134, 156, 190, 213, and 218 each coordinate S-adenosyl-L-methionine.

This sequence belongs to the class I-like SAM-binding methyltransferase superfamily. mRNA cap 0 methyltransferase family.

It localises to the nucleus. The enzyme catalyses a 5'-end (5'-triphosphoguanosine)-ribonucleoside in mRNA + S-adenosyl-L-methionine = a 5'-end (N(7)-methyl 5'-triphosphoguanosine)-ribonucleoside in mRNA + S-adenosyl-L-homocysteine. Catalytic subunit of the mRNA-capping methyltransferase RNMT:RAMAC complex that methylates the N7 position of the added guanosine to the 5'-cap structure of mRNAs. Binds RNA containing 5'-terminal GpppC. The protein is mRNA cap guanine-N(7) methyltransferase (rnmt) of Xenopus tropicalis (Western clawed frog).